Consider the following 371-residue polypeptide: MLSRFKCSRLQLQKRAISVTKATTTTASQPKRRRTTTFSDALNKGPSFEDFVSGKAAKFTLDPLQQARSNIEEAKRLPRWLKVPIPKGTNYHKLKKDVRELKLSTVCEEAKCPNISECWGGGDSSKATATIMLLGDTCTRGCRFCSVKTNRAPSKPDPAEPENTAEAISRWGLGYVVLTTVDRDDLADGGAHHLAETVCRIKQKAPKTLVETLSGDFRGDLEMVKVMAQSGLDVYAHNLETVKDLTPHVRDRRATYEQSLSVLNQAKKTVPTLITKTSLMLGLGETDEQVLQTLQDLRAIGCDVVTFGQYMRPTKRHMKVVEYVKPEKFDYWRDKALELGFLYCASGPLVRSSYKAGEAFIENVLRKRANN.

A mitochondrion-targeting transit peptide spans 1 to 24 (MLSRFKCSRLQLQKRAISVTKATT). The segment covering 20–29 (TKATTTTASQ) has biased composition (polar residues). The disordered stretch occupies residues 20 to 42 (TKATTTTASQPKRRRTTTFSDAL). Residues C107, C112, C118, C138, C142, C145, and S353 each contribute to the [4Fe-4S] cluster site. The Radical SAM core domain occupies 121 to 342 (GGDSSKATAT…RDKALELGFL (222 aa)).

This sequence belongs to the radical SAM superfamily. Lipoyl synthase family. [4Fe-4S] cluster serves as cofactor.

It is found in the mitochondrion. It catalyses the reaction [[Fe-S] cluster scaffold protein carrying a second [4Fe-4S](2+) cluster] + N(6)-octanoyl-L-lysyl-[protein] + 2 oxidized [2Fe-2S]-[ferredoxin] + 2 S-adenosyl-L-methionine + 4 H(+) = [[Fe-S] cluster scaffold protein] + N(6)-[(R)-dihydrolipoyl]-L-lysyl-[protein] + 4 Fe(3+) + 2 hydrogen sulfide + 2 5'-deoxyadenosine + 2 L-methionine + 2 reduced [2Fe-2S]-[ferredoxin]. It functions in the pathway protein modification; protein lipoylation via endogenous pathway; protein N(6)-(lipoyl)lysine from octanoyl-[acyl-carrier-protein]: step 2/2. Catalyzes the radical-mediated insertion of two sulfur atoms into the C-6 and C-8 positions of the octanoyl moiety bound to the lipoyl domains of lipoate-dependent enzymes, thereby converting the octanoylated domains into lipoylated derivatives. The sequence is that of Lipoyl synthase, mitochondrial from Lachancea thermotolerans (strain ATCC 56472 / CBS 6340 / NRRL Y-8284) (Yeast).